A 336-amino-acid polypeptide reads, in one-letter code: Ornithine carbamoyltransferase, catabolic (336 aa).

Residues 57 to 60, glutamine 84, arginine 108, and 136 to 139 each bind carbamoyl phosphate; these read STRT and HPTQ. L-ornithine is bound by residues asparagine 169, aspartate 233, and 237–238; that span reads SM. Residues 275 to 276 and arginine 322 each bind carbamoyl phosphate; that span reads CL.

Belongs to the aspartate/ornithine carbamoyltransferase superfamily. OTCase family.

The protein resides in the cytoplasm. It carries out the reaction carbamoyl phosphate + L-ornithine = L-citrulline + phosphate + H(+). It participates in amino-acid degradation; L-arginine degradation via ADI pathway; carbamoyl phosphate from L-arginine: step 2/2. Its function is as follows. Reversibly catalyzes the transfer of the carbamoyl group from carbamoyl phosphate (CP) to the N(epsilon) atom of ornithine (ORN) to produce L-citrulline. The sequence is that of Ornithine carbamoyltransferase, catabolic from Chromobacterium violaceum (strain ATCC 12472 / DSM 30191 / JCM 1249 / CCUG 213 / NBRC 12614 / NCIMB 9131 / NCTC 9757 / MK).